The chain runs to 90 residues: Small ribosomal subunit protein bS20 (90 aa).

The protein belongs to the bacterial ribosomal protein bS20 family.

Its function is as follows. Binds directly to 16S ribosomal RNA. In Mesomycoplasma hyopneumoniae (strain 232) (Mycoplasma hyopneumoniae), this protein is Small ribosomal subunit protein bS20.